A 1414-amino-acid chain; its full sequence is Calcium-transporting ATPase 2 (1414 aa).

2 disordered regions span residues 1 to 231 (MSRN…PSRL) and 265 to 294 (AVGTDEGNAENGAPRSSADMPGGNGPQWRA). The Cytoplasmic portion of the chain corresponds to 1-327 (MSRNNPPPVI…LLMWLAFKDK (327 aa)). 2 stretches are compositionally biased toward low complexity: residues 33 to 53 (PTPTLVIPGSPASESSHPESP) and 75 to 96 (SPTPSYSSALTPPSPTLTSSSS). Residues 179–189 (DGDRGEDDANK) show a composition bias toward basic and acidic residues. Over residues 190–201 (KGKKDKKGKKGK) the composition is skewed to basic residues. The span at 202–229 (KDKEEPPSAHLDPDKDKTDPTPFREKPS) shows a compositional bias: basic and acidic residues. The helical transmembrane segment at 328 to 348 (VLILLSVAAVVSLALGLYQDL) threads the bilayer. Residues 349–370 (GTPPKIIYNDECPDGCEEAQVD) lie on the Vacuolar side of the membrane. The helical transmembrane segment at 371–391 (WVEGVAIVVAIIIVVLVGSIN) threads the bilayer. The Cytoplasmic portion of the chain corresponds to 392–541 (DWQKERQFKK…TPLQIKLNHL (150 aa)). A helical membrane pass occupies residues 542 to 562 (AELIAKLGGASGLLLFIALMI). Topologically, residues 563–585 (RFFVQLKTNPDRSANDKAQSFIQ) are vacuolar. Residues 586–606 (ILIIAVTLVVVAVPEGLPLAV) form a helical membrane-spanning segment. Ca(2+) is bound by residues Val-595 and Glu-600. The Cytoplasmic segment spans residues 607–1040 (TLALAFATKR…GRCVNDSVKK (434 aa)). Asp-642 serves as the catalytic 4-aspartylphosphate intermediate. Mg(2+)-binding residues include Asp-642 and Thr-644. ATP contacts are provided by residues Thr-644, Glu-737, Arg-779, 909–911 (TGD), Arg-958, and Lys-964. Asp-983 contacts Mg(2+). An ATP-binding site is contributed by Asn-986. The chain crosses the membrane as a helical span at residues 1041–1061 (FLQFQISVNITAVFITFISAV). Asn-1049 contributes to the Ca(2+) binding site. Over 1062–1068 (ASSSEES) the chain is Vacuolar. Residues 1069–1089 (VLTAVQLLWVNLIMDTFAALA) form a helical membrane-spanning segment. Positions 1079 and 1083 each coordinate Ca(2+). Topologically, residues 1090–1118 (LATDPATESSLDRKPDRKNAPLITVEMFK) are cytoplasmic. The helical transmembrane segment at 1119–1139 (MIMVQAIYQIIVCLVLHFAGL) threads the bilayer. Residues 1140–1153 (KILGLEDNDQNNTE) lie on the Vacuolar side of the membrane. A helical membrane pass occupies residues 1154 to 1171 (LGALVFNCFVFCQIFNQL). The Cytoplasmic portion of the chain corresponds to 1172 to 1191 (NCRRLDRKLNVLEGFWRNWY). The chain crosses the membrane as a helical span at residues 1192–1212 (FIIIFLIMVGGQILIVEVGGA). Position 1208 (Glu-1208) interacts with Ca(2+). Residues 1213 to 1223 (AFQVTRLGGRD) are Vacuolar-facing. The chain crosses the membrane as a helical span at residues 1224-1244 (WGITLVIGALSLPIGALVRLT). The Cytoplasmic segment spans residues 1245 to 1414 (PTGPFARLLV…GLSSGDANNV (170 aa)). The disordered stretch occupies residues 1376-1414 (PRTNPDDPLYAKFGLQPPESRGSSVSGAEGLSSGDANNV).

It belongs to the cation transport ATPase (P-type) (TC 3.A.3) family.

The protein localises to the vacuole membrane. The enzyme catalyses Ca(2+)(in) + ATP + H2O = Ca(2+)(out) + ADP + phosphate + H(+). In terms of biological role, this magnesium-dependent enzyme catalyzes the hydrolysis of ATP coupled with the transport of calcium. Transports calcium to the vacuole and participates in the control of cytosolic free calcium. The polypeptide is Calcium-transporting ATPase 2 (Cryptococcus neoformans var. grubii serotype A (strain H99 / ATCC 208821 / CBS 10515 / FGSC 9487) (Filobasidiella neoformans var. grubii)).